Here is a 424-residue protein sequence, read N- to C-terminus: STAM-binding protein (424 aa).

An interaction with CHMP3 region spans residues 1–127 (MSDHGDVSLP…YEQYKERKKK (127 aa)). Phosphoserine is present on residues Ser2 and Ser48. Residues 227-231 (PAKPP) are interaction with STAM. Phosphoserine is present on Ser243. Residues 257 to 388 (IVVPRNLCSE…LTDYGLQEIS (132 aa)) enclose the MPN domain. Zn(2+) contacts are provided by His335, His337, Asp348, His350, Cys390, His396, and His398. A JAMM motif motif is present at residues 335–348 (HTHPTQTAFLSSVD).

It belongs to the peptidase M67C family. In terms of assembly, interacts with STAM. Interacts with SMAD6 and SMAD7. Interacts with CHMP3; the interaction appears to relieve the autoinhibition of CHMP3. Interacts with SMURF2 and RNF11; this interaction promotes ubiquitination. Zn(2+) serves as cofactor. Phosphorylated after BMP type I receptor activation. Post-translationally, ubiquitinated by SMURF2 in the presence of RNF11. Expressed in brain.

It is found in the nucleus. It localises to the membrane. Its subcellular location is the cytoplasm. The protein resides in the early endosome. Its activity is regulated as follows. Inhibited by N-ethylmaleimide. Functionally, zinc metalloprotease that specifically cleaves 'Lys-63'-linked polyubiquitin chains. Does not cleave 'Lys-48'-linked polyubiquitin chains. Plays a role in signal transduction for cell growth and MYC induction mediated by IL-2 and GM-CSF. Potentiates BMP (bone morphogenetic protein) signaling by antagonizing the inhibitory action of SMAD6 and SMAD7. Has a key role in regulation of cell surface receptor-mediated endocytosis and ubiquitin-dependent sorting of receptors to lysosomes. Endosomal localization of STAMBP is required for efficient EGFR degradation but not for its internalization. Involved in the negative regulation of PI3K-AKT-mTOR and RAS-MAP signaling pathways. This is STAM-binding protein (Stambp) from Mus musculus (Mouse).